The following is a 264-amino-acid chain: Glutamate racemase (264 aa).

Substrate contacts are provided by residues 11-12 (DS) and 43-44 (YG). The active-site Proton donor/acceptor is the Cys74. 75-76 (NT) contacts substrate. Cys193 functions as the Proton donor/acceptor in the catalytic mechanism. A substrate-binding site is contributed by 194-195 (TH).

Belongs to the aspartate/glutamate racemases family.

The catalysed reaction is L-glutamate = D-glutamate. The protein operates within cell wall biogenesis; peptidoglycan biosynthesis. In terms of biological role, provides the (R)-glutamate required for cell wall biosynthesis. The chain is Glutamate racemase from Bifidobacterium longum subsp. infantis (strain ATCC 15697 / DSM 20088 / JCM 1222 / NCTC 11817 / S12).